The chain runs to 316 residues: uncharacterized protein (316 aa).

A helical membrane pass occupies residues 12–34 (RWVCLTSVILFCFCIAVMRYGGV).

It localises to the membrane. This is an uncharacterized protein from Treponema pallidum (strain Nichols).